Consider the following 68-residue polypeptide: MGRKWSGPTAEHQLPMPPPGVRLDSWKGVASGCSPSKASQEARGKEKCPTLNGQPQWSALFTLPPQRE.

The segment at 28-68 is disordered; that stretch reads GVASGCSPSKASQEARGKEKCPTLNGQPQWSALFTLPPQRE.

As to expression, shows reduced expression in Wilms' tumor samples.

The polypeptide is KCNQ1 downstream neighbor protein (KCNQ1DN) (Homo sapiens (Human)).